A 354-amino-acid polypeptide reads, in one-letter code: MAKKKKLTKGQVRRVRSNQQKRLKKQEESIQWDENMLGASKQGLVITRFGQHADIEDLETGEVQRCNLRRGIESLVSGDRVLWREGLESMAGISGVVEAVEPRTSMLTRPDYYDGLKPVAANIDQMVIVSSVLPELSLNIIDRYLVAAETLNIAPLLVLNKVDLLEVDDRAMYEEWLKEYERIGYKVLFVSKNSGEGISDLEVQLRDRINIFVGQSGVGKSSLVNALMPELEQEVEEGAISENSGLGQHTTTAARLYHIPTGGDLIDSPGVREFGLWHLEAEEVTKAFVEFRPYLGGCKFRDCKHNDDPGCILREAVEKGEVSEVRFENYHRILESMMENKANRQYSRNKKADL.

A compositionally biased stretch (basic residues) spans 1–24 (MAKKKKLTKGQVRRVRSNQQKRLK). A disordered region spans residues 1–28 (MAKKKKLTKGQVRRVRSNQQKRLKKQEE). The 162-residue stretch at 113–274 (YDGLKPVAAN…LIDSPGVREF (162 aa)) folds into the CP-type G domain. GTP-binding positions include 160 to 163 (NKVD) and 214 to 222 (GQSGVGKSS). 4 residues coordinate Zn(2+): Cys298, Cys303, His305, and Cys311.

The protein belongs to the TRAFAC class YlqF/YawG GTPase family. RsgA subfamily. Monomer. Associates with 30S ribosomal subunit, binds 16S rRNA. Requires Zn(2+) as cofactor.

It localises to the cytoplasm. In terms of biological role, one of several proteins that assist in the late maturation steps of the functional core of the 30S ribosomal subunit. Helps release RbfA from mature subunits. May play a role in the assembly of ribosomal proteins into the subunit. Circularly permuted GTPase that catalyzes slow GTP hydrolysis, GTPase activity is stimulated by the 30S ribosomal subunit. The chain is Small ribosomal subunit biogenesis GTPase RsgA 1 from Vibrio parahaemolyticus serotype O3:K6 (strain RIMD 2210633).